The sequence spans 1029 residues: Carbamoyl phosphate synthase large chain (1029 aa).

Positions 1 to 402 (MPKRTDLQTI…SLQKALRSTE (402 aa)) are carboxyphosphate synthetic domain. ATP is bound by residues arginine 129, arginine 169, glycine 175, glycine 176, glutamate 208, isoleucine 210, glutamate 215, glycine 241, valine 242, histidine 243, glutamine 285, and glutamate 299. Residues 133–328 (QAAMKKIGVE…IAKIAALLAV (196 aa)) form the ATP-grasp 1 domain. Glutamine 285, glutamate 299, and asparagine 301 together coordinate Mg(2+). Residues glutamine 285, glutamate 299, and asparagine 301 each coordinate Mn(2+). The tract at residues 403-546 (SDVRGAFAEM…YSTYEWEDEV (144 aa)) is oligomerization domain. Positions 547-929 (TPTDKPKVVI…AYYRAELGAK (383 aa)) are carbamoyl phosphate synthetic domain. Residues 671 to 863 (NALCERLGLP…LAKYAARIAV (193 aa)) form the ATP-grasp 2 domain. The ATP site is built by arginine 707, glutamine 747, leucine 749, glutamate 754, glycine 779, valine 780, histidine 781, serine 782, glutamine 822, and glutamate 834. Mg(2+) contacts are provided by glutamine 822, glutamate 834, and asparagine 836. Residues glutamine 822, glutamate 834, and asparagine 836 each contribute to the Mn(2+) site. One can recognise an MGS-like domain in the interval 930 to 1028 (SNLPLSGTAL…QAWQQREAAA (99 aa)). The allosteric domain stretch occupies residues 930 to 1029 (SNLPLSGTAL…AWQQREAAAS (100 aa)).

Belongs to the CarB family. Composed of two chains; the small (or glutamine) chain promotes the hydrolysis of glutamine to ammonia, which is used by the large (or ammonia) chain to synthesize carbamoyl phosphate. Tetramer of heterodimers (alpha,beta)4. Mg(2+) serves as cofactor. The cofactor is Mn(2+).

It carries out the reaction hydrogencarbonate + L-glutamine + 2 ATP + H2O = carbamoyl phosphate + L-glutamate + 2 ADP + phosphate + 2 H(+). The enzyme catalyses hydrogencarbonate + NH4(+) + 2 ATP = carbamoyl phosphate + 2 ADP + phosphate + 2 H(+). Its pathway is amino-acid biosynthesis; L-arginine biosynthesis; carbamoyl phosphate from bicarbonate: step 1/1. The protein operates within pyrimidine metabolism; UMP biosynthesis via de novo pathway; (S)-dihydroorotate from bicarbonate: step 1/3. Its function is as follows. Large subunit of the glutamine-dependent carbamoyl phosphate synthetase (CPSase). CPSase catalyzes the formation of carbamoyl phosphate from the ammonia moiety of glutamine, carbonate, and phosphate donated by ATP, constituting the first step of 2 biosynthetic pathways, one leading to arginine and/or urea and the other to pyrimidine nucleotides. The large subunit (synthetase) binds the substrates ammonia (free or transferred from glutamine from the small subunit), hydrogencarbonate and ATP and carries out an ATP-coupled ligase reaction, activating hydrogencarbonate by forming carboxy phosphate which reacts with ammonia to form carbamoyl phosphate. This chain is Carbamoyl phosphate synthase large chain, found in Deinococcus geothermalis (strain DSM 11300 / CIP 105573 / AG-3a).